Reading from the N-terminus, the 540-residue chain is Chaperonin GroEL (540 aa).

Residues 30–33, Lys-51, 87–91, Gly-415, and Asp-495 each bind ATP; these read TLGP and DGTTT.

This sequence belongs to the chaperonin (HSP60) family. Forms a cylinder of 14 subunits composed of two heptameric rings stacked back-to-back. Interacts with the co-chaperonin GroES.

Its subcellular location is the cytoplasm. The enzyme catalyses ATP + H2O + a folded polypeptide = ADP + phosphate + an unfolded polypeptide.. In terms of biological role, together with its co-chaperonin GroES, plays an essential role in assisting protein folding. The GroEL-GroES system forms a nano-cage that allows encapsulation of the non-native substrate proteins and provides a physical environment optimized to promote and accelerate protein folding. The polypeptide is Chaperonin GroEL (Erwinia aphidicola).